The primary structure comprises 302 residues: Methionyl-tRNA formyltransferase (302 aa).

Residue 108–111 (SLLP) participates in (6S)-5,6,7,8-tetrahydrofolate binding. A compositionally biased stretch (basic and acidic residues) spans 279 to 288 (KRPMEPEEFL). Positions 279-302 (KRPMEPEEFLRGFPLPEGSRAHTS) are disordered.

This sequence belongs to the Fmt family.

The catalysed reaction is L-methionyl-tRNA(fMet) + (6R)-10-formyltetrahydrofolate = N-formyl-L-methionyl-tRNA(fMet) + (6S)-5,6,7,8-tetrahydrofolate + H(+). Functionally, attaches a formyl group to the free amino group of methionyl-tRNA(fMet). The formyl group appears to play a dual role in the initiator identity of N-formylmethionyl-tRNA by promoting its recognition by IF2 and preventing the misappropriation of this tRNA by the elongation apparatus. This is Methionyl-tRNA formyltransferase from Cereibacter sphaeroides (strain ATCC 17023 / DSM 158 / JCM 6121 / CCUG 31486 / LMG 2827 / NBRC 12203 / NCIMB 8253 / ATH 2.4.1.) (Rhodobacter sphaeroides).